Reading from the N-terminus, the 270-residue chain is 5'-AMP-activated protein kinase subunit beta-1 (270 aa).

The disordered stretch occupies residues 1 to 43; sequence MGNTSSERAALERQAGHKTPRRDSSGGTKDGDRPKILMDSPED. Glycine 2 carries the N-myristoyl glycine lipid modification. The residue at position 4 (threonine 4) is a Phosphothreonine. Phosphoserine is present on residues serine 5 and serine 6. Residues 9–36 show a composition bias toward basic and acidic residues; sequence AALERQAGHKTPRRDSSGGTKDGDRPKI. Threonine 19 carries the post-translational modification Phosphothreonine. A phosphoserine; by autocatalysis mark is found at serine 24 and serine 25. Phosphoserine is present on residues serine 40, serine 96, and serine 101. A glycogen-binding domain region spans residues 68–163; it reads EVNEKAPAQA…QVKKTDFEVF (96 aa). Position 108 is a phosphoserine; by autocatalysis (serine 108). Residue threonine 148 is modified to Phosphothreonine. Serine 182 is modified (phosphoserine). Lysine 201 carries the post-translational modification N6-succinyllysine.

The protein belongs to the 5'-AMP-activated protein kinase beta subunit family. In terms of assembly, AMPK is a heterotrimer of an alpha catalytic subunit (PRKAA1 or PRKAA2), a beta (PRKAB1 or PRKAB2) and a gamma non-catalytic subunits (PRKAG1, PRKAG2 or PRKAG3). Interacts with FNIP1 and FNIP2. In terms of processing, phosphorylated when associated with the catalytic subunit (PRKAA1 or PRKAA2). Phosphorylated by ULK1; leading to negatively regulate AMPK activity and suggesting the existence of a regulatory feedback loop between ULK1 and AMPK. Highly expressed in kidney, heart, white adipose tissue, lung and spleen.

Non-catalytic subunit of AMP-activated protein kinase (AMPK), an energy sensor protein kinase that plays a key role in regulating cellular energy metabolism. In response to reduction of intracellular ATP levels, AMPK activates energy-producing pathways and inhibits energy-consuming processes: inhibits protein, carbohydrate and lipid biosynthesis, as well as cell growth and proliferation. AMPK acts via direct phosphorylation of metabolic enzymes, and by longer-term effects via phosphorylation of transcription regulators. Also acts as a regulator of cellular polarity by remodeling the actin cytoskeleton; probably by indirectly activating myosin. Beta non-catalytic subunit acts as a scaffold on which the AMPK complex assembles, via its C-terminus that bridges alpha (PRKAA1 or PRKAA2) and gamma subunits (PRKAG1, PRKAG2 or PRKAG3). This is 5'-AMP-activated protein kinase subunit beta-1 (Prkab1) from Rattus norvegicus (Rat).